The primary structure comprises 316 residues: ATP synthase gamma chain (316 aa).

This sequence belongs to the ATPase gamma chain family. As to quaternary structure, F-type ATPases have 2 components, CF(1) - the catalytic core - and CF(0) - the membrane proton channel. CF(1) has five subunits: alpha(3), beta(3), gamma(1), delta(1), epsilon(1). CF(0) has three main subunits: a, b and c.

It localises to the cellular thylakoid membrane. Its function is as follows. Produces ATP from ADP in the presence of a proton gradient across the membrane. The gamma chain is believed to be important in regulating ATPase activity and the flow of protons through the CF(0) complex. In Synechococcus sp. (strain ATCC 27144 / PCC 6301 / SAUG 1402/1) (Anacystis nidulans), this protein is ATP synthase gamma chain.